A 152-amino-acid polypeptide reads, in one-letter code: Transcriptional regulator MraZ (152 aa).

SpoVT-AbrB domains follow at residues A5–E52 and A81–T124.

The protein belongs to the MraZ family. Forms oligomers.

The protein localises to the cytoplasm. It localises to the nucleoid. Functionally, negatively regulates its own expression and that of the subsequent genes in the proximal part of the division and cell wall (dcw) gene cluster. Acts by binding directly to DNA. May also regulate the expression of genes outside the dcw cluster. In Shigella flexneri serotype 5b (strain 8401), this protein is Transcriptional regulator MraZ.